A 140-amino-acid chain; its full sequence is 3-hydroxyacyl-[acyl-carrier-protein] dehydratase FabZ (140 aa).

The active site involves H48.

This sequence belongs to the thioester dehydratase family. FabZ subfamily.

The protein resides in the cytoplasm. It catalyses the reaction a (3R)-hydroxyacyl-[ACP] = a (2E)-enoyl-[ACP] + H2O. Involved in unsaturated fatty acids biosynthesis. Catalyzes the dehydration of short chain beta-hydroxyacyl-ACPs and long chain saturated and unsaturated beta-hydroxyacyl-ACPs. This chain is 3-hydroxyacyl-[acyl-carrier-protein] dehydratase FabZ, found in Caldicellulosiruptor bescii (strain ATCC BAA-1888 / DSM 6725 / KCTC 15123 / Z-1320) (Anaerocellum thermophilum).